The primary structure comprises 308 residues: Phosphoribosylaminoimidazole-succinocarboxamide synthase (308 aa).

The protein belongs to the SAICAR synthetase family.

It carries out the reaction 5-amino-1-(5-phospho-D-ribosyl)imidazole-4-carboxylate + L-aspartate + ATP = (2S)-2-[5-amino-1-(5-phospho-beta-D-ribosyl)imidazole-4-carboxamido]succinate + ADP + phosphate + 2 H(+). The protein operates within purine metabolism; IMP biosynthesis via de novo pathway; 5-amino-1-(5-phospho-D-ribosyl)imidazole-4-carboxamide from 5-amino-1-(5-phospho-D-ribosyl)imidazole-4-carboxylate: step 1/2. The protein is Phosphoribosylaminoimidazole-succinocarboxamide synthase of Xanthomonas oryzae pv. oryzae (strain PXO99A).